The sequence spans 162 residues: MLLTAEFWVAVAFVAFLVIVWRVGGFSMMTSGLDSRAKRVRHELDEARRLREEAAAVLADYKRRRTEAEREAEAIVAGAREDAERIAAEGHARLNDFVARRTKAAEAKIAQAEAQASAQVRAAAADAAVKVSETLLRERLQGGAAQDLVRASLGDVKSRLQA.

The chain crosses the membrane as a helical span at residues M1–W21.

The protein belongs to the ATPase B chain family. F-type ATPases have 2 components, F(1) - the catalytic core - and F(0) - the membrane proton channel. F(1) has five subunits: alpha(3), beta(3), gamma(1), delta(1), epsilon(1). F(0) has three main subunits: a(1), b(2) and c(10-14). The alpha and beta chains form an alternating ring which encloses part of the gamma chain. F(1) is attached to F(0) by a central stalk formed by the gamma and epsilon chains, while a peripheral stalk is formed by the delta and b chains.

The protein localises to the cell inner membrane. Its function is as follows. F(1)F(0) ATP synthase produces ATP from ADP in the presence of a proton or sodium gradient. F-type ATPases consist of two structural domains, F(1) containing the extramembraneous catalytic core and F(0) containing the membrane proton channel, linked together by a central stalk and a peripheral stalk. During catalysis, ATP synthesis in the catalytic domain of F(1) is coupled via a rotary mechanism of the central stalk subunits to proton translocation. Functionally, component of the F(0) channel, it forms part of the peripheral stalk, linking F(1) to F(0). The protein is ATP synthase subunit b 1 of Methylorubrum populi (strain ATCC BAA-705 / NCIMB 13946 / BJ001) (Methylobacterium populi).